The primary structure comprises 95 residues: Oxytetracycline polyketide synthase acyl carrier protein (95 aa).

The region spanning 3-81 (LLTLSDLLTL…ALIEMTNASL (79 aa)) is the Carrier domain. An O-(pantetheine 4'-phosphoryl)serine modification is found at Ser-41.

4'-phosphopantetheine is transferred from CoA to a specific serine of the apo-ACP-like protein.

It participates in antibiotic biosynthesis; oxytetracycline biosynthesis. Acyl carrier protein. The polypeptide is Oxytetracycline polyketide synthase acyl carrier protein (Streptomyces rimosus).